A 72-amino-acid polypeptide reads, in one-letter code: Conotoxin im23a (72 aa).

The N-terminal stretch at 1 to 22 is a signal peptide; that stretch reads MIMRMTLTLFVLVVMTAASASG. Residues 23-28 constitute a propeptide that is removed on maturation; the sequence is DALTEA. 3 disulfide bridges follow: cysteine 34–cysteine 41, cysteine 45–cysteine 55, and cysteine 56–cysteine 71.

Belongs to the conotoxin K superfamily. As to expression, expressed by the venom duct.

Its subcellular location is the secreted. In terms of biological role, neurotoxin that induces excitatory symptoms in mice following intracranial administration. No symptoms are observed after intraperitoneal and intravenous (tail vein) injections. The sequence is that of Conotoxin im23a from Conus imperialis (Imperial cone).